Reading from the N-terminus, the 605-residue chain is Protein DENND6A (605 aa).

The tract at residues 1-20 is disordered; the sequence is MALPGPAVFGPGSRGSLDEA. The uDENN domain occupies 60–239; that stretch reads HCVCVVGFDL…KVRIPTCHDK (180 aa). At serine 124 the chain carries Phosphoserine. Residues 265–390 enclose the cDENN domain; it reads EVDLFRCFCP…VKVKKLKNLK (126 aa). One can recognise a dDENN domain in the interval 392–525; that stretch reads LDSKPGVYTS…KTRRKEMTQK (134 aa). An N6-methyllysine modification is found at lysine 507.

The protein belongs to the DENND6 family.

The protein resides in the recycling endosome. The protein localises to the cytoplasm. Functionally, guanine nucleotide exchange factor (GEF) for RAB14. Component of an endocytic recycling pathway that is required for the control of ADAM10 transport, shedding of N-cadherin/CDH2 by ADAM9 or ADAM10 and regulation of cell-cell junctions. Required for RAB14 recruitment to recycling endosomes. This chain is Protein DENND6A (Dennd6a), found in Mus musculus (Mouse).